The chain runs to 235 residues: Large ribosomal subunit protein uL1 (235 aa).

Belongs to the universal ribosomal protein uL1 family. As to quaternary structure, part of the 50S ribosomal subunit.

Its function is as follows. Binds directly to 23S rRNA. The L1 stalk is quite mobile in the ribosome, and is involved in E site tRNA release. In terms of biological role, protein L1 is also a translational repressor protein, it controls the translation of the L11 operon by binding to its mRNA. This chain is Large ribosomal subunit protein uL1, found in Solidesulfovibrio magneticus (strain ATCC 700980 / DSM 13731 / RS-1) (Desulfovibrio magneticus).